Reading from the N-terminus, the 177-residue chain is Putative thioredoxin peroxidase (177 aa).

In terms of domain architecture, Thioredoxin spans 1–158; the sequence is MFPKTLTDSK…IIRLIDAITF (158 aa). Catalysis depends on cysteine 45, which acts as the Cysteine sulfenic acid (-SOH) intermediate.

The protein belongs to the peroxiredoxin family. AhpC/Prx1 subfamily. As to quaternary structure, homodimer; disulfide-linked, upon oxidation.

It catalyses the reaction a hydroperoxide + [thioredoxin]-dithiol = an alcohol + [thioredoxin]-disulfide + H2O. In terms of biological role, thiol-specific peroxidase that catalyzes the reduction of hydrogen peroxide and organic hydroperoxides to water and alcohols, respectively. Plays a role in cell protection against oxidative stress by detoxifying peroxides and as sensor of hydrogen peroxide-mediated signaling events. This chain is Putative thioredoxin peroxidase, found in Encephalitozoon cuniculi (strain GB-M1) (Microsporidian parasite).